Here is a 308-residue protein sequence, read N- to C-terminus: Spermidine synthase 1 (308 aa).

The region spanning 17-254 is the PABS domain; the sequence is PGWFSEISPL…GVIGFMLCST (238 aa). Q48 is an S-adenosyl 3-(methylsulfanyl)propylamine binding site. Residue Y78 coordinates putrescine. Residues Q79, D103, E123, 154–155, and D173 contribute to the S-adenosyl 3-(methylsulfanyl)propylamine site; that span reads DG. D173 (proton acceptor) is an active-site residue. Putrescine contacts are provided by residues 173–176 and Y242; that span reads DSSD.

The protein belongs to the spermidine/spermine synthase family.

It catalyses the reaction S-adenosyl 3-(methylsulfanyl)propylamine + putrescine = S-methyl-5'-thioadenosine + spermidine + H(+). It functions in the pathway amine and polyamine biosynthesis; spermidine biosynthesis; spermidine from putrescine: step 1/1. This is Spermidine synthase 1 from Datura stramonium (Jimsonweed).